The sequence spans 793 residues: E3 UFM1-protein ligase 1 (793 aa).

At A2 the chain carries N-acetylalanine. The mediates interaction with DDRGK1 stretch occupies residues 2-200; sequence ADAWEEIRRL…RGLFSAITRP (199 aa). Residues 2–212 are required for E3 UFM1-protein ligase activity; that stretch reads ADAWEEIRRL…VNSLISKYGF (211 aa). An involved in CDK5RAP3-binding region spans residues 121 to 250; that stretch reads DRLAEEVNDK…KAVFVPDIYS (130 aa). The tract at residues 200 to 400 is mediates interaction with TRIP4; that stretch reads PTAVNSLISK…NPVHLITEED (201 aa). Residues 407–473 form a disordered region; it reads LESVSTSKKD…SSHTGKKKPE (67 aa). Position 433 is an omega-N-methylarginine (R433). Residue S458 is modified to Phosphoserine. The mediates interaction with CDK5RAP3 stretch occupies residues 490 to 684; it reads IQDAPEEFIS…QLKVTEDPAL (195 aa). Residue T536 is modified to Phosphothreonine.

The protein belongs to the UFL1 family. Catalytic component of the UFM1 ribosome E3 ligase (UREL) complex, composed of UFL1, DDRGK1 and CDK5RAP3. Interacts with E2-like enzyme UFC1. Interacts with RELA. Interacts with NBN; promoting recruitment to double-strand breaks following DNA damage. Interacts (when phosphorylated) with YWHAG/14-3-3-gamma; sequestering UFL1 and preventing its association with PDCD1/PD-1 substrate. Ubiquitinated, leading to its degradation by the proteasome. Interaction with CDK5RAP3 protects both proteins against ubiquitination and degradation via the proteasome. In terms of processing, phosphorylation at Thr-536 by AMPK promotes its interaction with YWHAG/14-3-3-gamma, thereby preventing UFL1 association with PDCD1/PD-1 substrate.

It localises to the endoplasmic reticulum membrane. Its subcellular location is the cytoplasm. It is found in the cytosol. The protein resides in the nucleus. The protein localises to the chromosome. In terms of biological role, E3 protein ligase that mediates ufmylation, the covalent attachment of the ubiquitin-like modifier UFM1 to lysine residues on target proteins, and which plays a key role in various processes, such as ribosome recycling, response to DNA damage, interferon response or reticulophagy (also called ER-phagy). Catalyzes ufmylation of many protein, such as CD274/PD-L1, CDK5RAP3, CYB5R3, DDRGK1, EIF6, histone H4, MRE11, P4HB, PDCD1/PD-1, TRIP4, RPN1, RPS20/uS10, RPL10/uL16, RPL26/uL24, SYVN1/HRD1 and TP53/p53. As part of the UREL complex, plays a key role in ribosome recycling by catalyzing mono-ufmylation of RPL26/uL24 subunit of the 60S ribosome. Ufmylation of RPL26/uL24 occurs on free 60S ribosomes following ribosome dissociation: it weakens the junction between post-termination 60S subunits and SEC61 translocons, promoting release and recycling of the large ribosomal subunit from the endoplasmic reticulum membrane. Ufmylation of RPL26/uL24 and subsequent 60S ribosome recycling either take place after normal termination of translation or after ribosome stalling during cotranslational translocation at the endoplasmic reticulum. Involved in reticulophagy in response to endoplasmic reticulum stress by mediating ufmylation of proteins such as CYB5R3 and RPN1, thereby promoting lysosomal degradation of ufmylated proteins. Ufmylation in response to endoplasmic reticulum stress is essential for processes such as hematopoiesis, blood vessel morphogenesis or inflammatory response. Mediates ufmylation of DDRGK1 and CDK5RAP3; the role of these modifications is however unclear: as both DDRGK1 and CDK5RAP3 act as substrate adapters for ufmylation, it is uncertain whether ufmylation of these proteins is, a collateral effect or is required for ufmylation. Acts as a negative regulator of T-cell activation by mediating ufmylation and stabilization of PDCD1/PD-1. Also involved in the response to DNA damage: recruited to double-strand break sites following DNA damage and mediates monoufmylation of histone H4 and ufmylation of MRE11. Mediates ufmylation of TP53/p53, promoting its stability. Catalyzes ufmylation of TRIP4, thereby playing a role in nuclear receptor-mediated transcription. Required for hematopoietic stem cell function and hematopoiesis. This Macaca fascicularis (Crab-eating macaque) protein is E3 UFM1-protein ligase 1.